We begin with the raw amino-acid sequence, 91 residues long: Progonadoliberin-1 (91 aa).

The N-terminal stretch at 1–23 (MEPIPKLLAGLLLLTLCVVGCSS) is a signal peptide. The residue at position 24 (Q24) is a Pyrrolidone carboxylic acid. Glycine amide is present on G33.

The protein belongs to the GnRH family. In terms of processing, the precursor is cleaved by ACE, which removes the Gly-Lys-Arg peptide at the C-terminus, leading to mature hormone. The mature form of Gonadoliberin-1 is also cleaved and degraded by ACE.

The protein resides in the secreted. Functionally, stimulates the secretion of gonadotropins; it stimulates the secretion of both luteinizing and follicle-stimulating hormones. The chain is Progonadoliberin-1 (GNRH1) from Sus scrofa (Pig).